The chain runs to 365 residues: Glycolaldehyde reductase (365 aa).

Residues Asp-37, Gly-94, Lys-95, Thr-116, Ser-119, Ser-125, Leu-127, and Tyr-131 each contribute to the NAD(+) site. 3 residues coordinate Zn(2+): Asp-171, His-254, and His-271.

It belongs to the iron-containing alcohol dehydrogenase family. The cofactor is Zn(2+).

It catalyses the reaction ethylene glycol + NAD(+) = glycolaldehyde + NADH + H(+). Is subject to substrate inhibition. Oxidoreductase involved in the non-carboxylating pentose bisphosphate pathway, a nucleoside degradation pathway present in some halophilic archaea. Catalyzes the reduction of glycolaldehyde to ethylene glycol. Cannot catalyze the oxidation of glycerol 1-phosphate nor the reduction of dihydroxyacetone phosphate (DHAP). This Halobacterium salinarum (strain ATCC 700922 / JCM 11081 / NRC-1) (Halobacterium halobium) protein is Glycolaldehyde reductase.